The sequence spans 452 residues: Glutathione gamma-glutamylcysteinyltransferase 2 (452 aa).

Residues 1–220 form the Peptidase C83 domain; that stretch reads MSMASLYRRS…GFMLISRPHR (220 aa). Residues 287-315 adopt a coiled-coil conformation; sequence EDVNQNLSSEEKSRLKLKQELLKQVQETK.

The protein belongs to the phytochelatin synthase family. In terms of tissue distribution, expressed in shoots, roots, leaves, stems and flowers.

It carries out the reaction [Glu(-Cys)](n)-Gly + glutathione + H(+) = [Glu(-Cys)](n+1)-Gly + glycine. Its activity is regulated as follows. Requires cadmium for activity. Also activated in heterologous system by AsO(4)(3-) ions, but not by Cu(2+), Zn(2+), Mn(2+) or Ni(2+) ions. Functionally, involved in the synthesis of phytochelatins (PC) and homophytochelatins (hPC), the heavy-metal-binding peptides of plants. The protein is Glutathione gamma-glutamylcysteinyltransferase 2 (PCS2) of Arabidopsis thaliana (Mouse-ear cress).